The following is a 418-amino-acid chain: UDP-N-acetylglucosamine 1-carboxyvinyltransferase (418 aa).

Position 22–23 (22–23 (KN)) interacts with phosphoenolpyruvate. Arg-91 is a binding site for UDP-N-acetyl-alpha-D-glucosamine. The Proton donor role is filled by Cys-115. Cys-115 is modified (2-(S-cysteinyl)pyruvic acid O-phosphothioketal). UDP-N-acetyl-alpha-D-glucosamine-binding positions include 120 to 124 (RPVDL), 160 to 163 (KVSV), Asp-305, and Ile-327.

It belongs to the EPSP synthase family. MurA subfamily.

The protein resides in the cytoplasm. It carries out the reaction phosphoenolpyruvate + UDP-N-acetyl-alpha-D-glucosamine = UDP-N-acetyl-3-O-(1-carboxyvinyl)-alpha-D-glucosamine + phosphate. Its pathway is cell wall biogenesis; peptidoglycan biosynthesis. Cell wall formation. Adds enolpyruvyl to UDP-N-acetylglucosamine. The protein is UDP-N-acetylglucosamine 1-carboxyvinyltransferase of Baumannia cicadellinicola subsp. Homalodisca coagulata.